Here is a 114-residue protein sequence, read N- to C-terminus: Non-specific lipid-transfer protein 1 (114 aa).

The first 23 residues, 1–23 (MEIAGKIACFVVLCMVVAAPCAE), serve as a signal peptide directing secretion. Intrachain disulfides connect Cys-27–Cys-73, Cys-37–Cys-50, Cys-51–Cys-96, and Cys-71–Cys-110.

This sequence belongs to the plant LTP family. High expression in leaf epidermis and shoot apex, and also in root epidermis during seedling germination.

Functionally, plant non-specific lipid-transfer proteins transfer phospholipids as well as galactolipids across membranes. Binds cis-unsaturated fatty acids and jasmonic acid with a higher affinity than linear chain fatty acids. Formation of the complex with jasmonic acid results in a conformational change facilitating the LPT1 binding on the elicitin plasma membrane receptor that is known to be involved in plant defense induction. May also play a role in wax or cutin deposition in the cell walls of expanding epidermal cells and certain secretory tissues. This chain is Non-specific lipid-transfer protein 1 (LTP1), found in Nicotiana tabacum (Common tobacco).